We begin with the raw amino-acid sequence, 295 residues long: NAD kinase (295 aa).

The active-site Proton acceptor is Asp-72. NAD(+)-binding positions include 72 to 73, 146 to 147, Arg-157, Lys-174, Asp-176, 187 to 192, and Gln-247; these read DG, ND, and TAYALS.

This sequence belongs to the NAD kinase family. Requires a divalent metal cation as cofactor.

It localises to the cytoplasm. The enzyme catalyses NAD(+) + ATP = ADP + NADP(+) + H(+). In terms of biological role, involved in the regulation of the intracellular balance of NAD and NADP, and is a key enzyme in the biosynthesis of NADP. Catalyzes specifically the phosphorylation on 2'-hydroxyl of the adenosine moiety of NAD to yield NADP. In Pseudomonas aeruginosa (strain LESB58), this protein is NAD kinase.